The sequence spans 285 residues: Chemotaxis protein LafT (285 aa).

4 helical membrane-spanning segments follow: residues 4–23 (FLGVLTILVCVFGGYMWAGG), 34–51 (FLIIIGAAAGSLIIGNPP), 171–191 (ALPGFGILAAVGGIIITMQAI), and 201–222 (HVAAALVGTFIGIFGCYCGLDP). Topologically, residues 223–285 (LSNAMAQRVK…MEKWLAEQEG (63 aa)) are cytoplasmic.

This sequence belongs to the MotA family.

It localises to the cell inner membrane. Required for rotation of the flagellar motor. Probable transmembrane proton channel. The polypeptide is Chemotaxis protein LafT (lafT) (Vibrio parahaemolyticus serotype O3:K6 (strain RIMD 2210633)).